The primary structure comprises 187 residues: Probable chorismate pyruvate-lyase (187 aa).

Arg-77, Leu-115, and Glu-174 together coordinate substrate.

This sequence belongs to the UbiC family.

The protein resides in the cytoplasm. The catalysed reaction is chorismate = 4-hydroxybenzoate + pyruvate. It participates in cofactor biosynthesis; ubiquinone biosynthesis. In terms of biological role, removes the pyruvyl group from chorismate, with concomitant aromatization of the ring, to provide 4-hydroxybenzoate (4HB) for the ubiquinone pathway. This is Probable chorismate pyruvate-lyase from Shewanella sp. (strain ANA-3).